The following is a 510-amino-acid chain: Bifunctional purine biosynthesis protein PurH (510 aa).

The MGS-like domain occupies 1–145 (MSKRALISVS…KNFEDVLVVT (145 aa)).

The protein belongs to the PurH family.

It carries out the reaction (6R)-10-formyltetrahydrofolate + 5-amino-1-(5-phospho-beta-D-ribosyl)imidazole-4-carboxamide = 5-formamido-1-(5-phospho-D-ribosyl)imidazole-4-carboxamide + (6S)-5,6,7,8-tetrahydrofolate. It catalyses the reaction IMP + H2O = 5-formamido-1-(5-phospho-D-ribosyl)imidazole-4-carboxamide. Its pathway is purine metabolism; IMP biosynthesis via de novo pathway; 5-formamido-1-(5-phospho-D-ribosyl)imidazole-4-carboxamide from 5-amino-1-(5-phospho-D-ribosyl)imidazole-4-carboxamide (10-formyl THF route): step 1/1. The protein operates within purine metabolism; IMP biosynthesis via de novo pathway; IMP from 5-formamido-1-(5-phospho-D-ribosyl)imidazole-4-carboxamide: step 1/1. In Oceanobacillus iheyensis (strain DSM 14371 / CIP 107618 / JCM 11309 / KCTC 3954 / HTE831), this protein is Bifunctional purine biosynthesis protein PurH.